The following is a 108-amino-acid chain: Urease subunit beta (108 aa).

The protein belongs to the urease beta subunit family. Heterotrimer of UreA (gamma), UreB (beta) and UreC (alpha) subunits. Three heterotrimers associate to form the active enzyme.

It is found in the cytoplasm. The enzyme catalyses urea + 2 H2O + H(+) = hydrogencarbonate + 2 NH4(+). The protein operates within nitrogen metabolism; urea degradation; CO(2) and NH(3) from urea (urease route): step 1/1. The chain is Urease subunit beta from Chromohalobacter salexigens (strain ATCC BAA-138 / DSM 3043 / CIP 106854 / NCIMB 13768 / 1H11).